Reading from the N-terminus, the 308-residue chain is MNVIIKAVVTASTLLMVSFSSFETSAQSPLLKEQIESIVIGKKATVGVAVWGPDDLEPLLINPFEKFPMQSVFKLHLAMLVLHQVDQGKLDLNQTVIVNRAKVLQNTWAPIMKAYQGDEFSVPVQQLLQYSVSHSDNVACDLLFELVGGPAALHDYIQSMGIKETAVVANEAQMHADDQVQYQNWTSMKGAAEILKKFEQKTQLSETSQALLWKWMVETTTGPERLKGLLPAGTVVAHKTGTSGIKAGKTAATNDLGIILLPDGRPLLVAVFVKDSAESSRTNEAIIAQVAQTAYQFELKKLSALSPN.

The N-terminal stretch at 1–26 is a signal peptide; that stretch reads MNVIIKAVVTASTLLMVSFSSFETSA. Residue Ser-71 is the Nucleophile; acyl-ester intermediate of the active site. Residues Lys-74, Ser-135, and Glu-171 each coordinate a beta-lactam.

This sequence belongs to the class-A beta-lactamase family. As to quaternary structure, monomer.

It localises to the secreted. It carries out the reaction a beta-lactam + H2O = a substituted beta-amino acid. Its activity is regulated as follows. Inhibited by the beta-lactamase-blocking agents clavulanic acid, tazobactam and sulbactam. Not inhibited by EDTA. Extended-spectrum beta-lactamase (ESBL) which confers resistance to penicillins, as well as first-, second- and third-generation cephalosporins, but not the carbapenem, imipenem, in the JM109 strain of E.coli. Has cefotaxime-hydrolyzing activity. The chain is Extended-spectrum beta-lactamase PER-1 from Pseudomonas aeruginosa.